A 43-amino-acid polypeptide reads, in one-letter code: Probable intron-encoded DNA endonuclease 2 (43 aa).

It belongs to the LAGLIDADG endonuclease family.

Its subcellular location is the mitochondrion. Mitochondrial DNA endonuclease involved in intron homing. This is Probable intron-encoded DNA endonuclease 2 (hegI2) from Mycosarcoma maydis (Corn smut fungus).